A 105-amino-acid polypeptide reads, in one-letter code: Small ribosomal subunit protein uS10 (105 aa).

The protein belongs to the universal ribosomal protein uS10 family. In terms of assembly, part of the 30S ribosomal subunit.

Involved in the binding of tRNA to the ribosomes. The protein is Small ribosomal subunit protein uS10 of Acidobacterium capsulatum (strain ATCC 51196 / DSM 11244 / BCRC 80197 / JCM 7670 / NBRC 15755 / NCIMB 13165 / 161).